The primary structure comprises 1381 residues: DNA-directed RNA polymerase subunit beta (1381 aa).

This sequence belongs to the RNA polymerase beta chain family. As to quaternary structure, the RNAP catalytic core consists of 2 alpha, 1 beta, 1 beta' and 1 omega subunit. When a sigma factor is associated with the core the holoenzyme is formed, which can initiate transcription.

It catalyses the reaction RNA(n) + a ribonucleoside 5'-triphosphate = RNA(n+1) + diphosphate. In terms of biological role, DNA-dependent RNA polymerase catalyzes the transcription of DNA into RNA using the four ribonucleoside triphosphates as substrates. The protein is DNA-directed RNA polymerase subunit beta of Halorhodospira halophila (strain DSM 244 / SL1) (Ectothiorhodospira halophila (strain DSM 244 / SL1)).